The chain runs to 417 residues: Adenosylhomocysteinase (417 aa).

Thr53, Asp125, and Glu149 together coordinate substrate. Residue 150 to 152 (TTT) participates in NAD(+) binding. 2 residues coordinate substrate: Lys179 and Asp183. NAD(+)-binding positions include Asn184, 213-218 (GYGWVG), Glu236, Asn271, 292-294 (AGH), and Asn339.

This sequence belongs to the adenosylhomocysteinase family. It depends on NAD(+) as a cofactor.

It is found in the cytoplasm. The catalysed reaction is S-adenosyl-L-homocysteine + H2O = L-homocysteine + adenosine. It participates in amino-acid biosynthesis; L-homocysteine biosynthesis; L-homocysteine from S-adenosyl-L-homocysteine: step 1/1. Its function is as follows. May play a key role in the regulation of the intracellular concentration of adenosylhomocysteine. The sequence is that of Adenosylhomocysteinase from Saccharolobus solfataricus (strain ATCC 35092 / DSM 1617 / JCM 11322 / P2) (Sulfolobus solfataricus).